A 556-amino-acid chain; its full sequence is Membrane protein insertase YidC (556 aa).

A helical membrane pass occupies residues 5–25 (TLTAIVLSFVLLTAFQFYMAW). The interval 36–74 (QVQSGESSAPAPLASTAPVADALPPPVEGMAGSAPQQAM) is disordered. The span at 42-55 (SSAPAPLASTAPVA) shows a compositional bias: low complexity. 4 helical membrane-spanning segments follow: residues 370–390 (NYGVAIILLTLAIKLLFFPLA), 441–461 (LPILVQIPVFFALYKVLFLSV), 468–488 (FMLWIPDLSAMDPFYVLPLLM), and 510–530 (IMMFLPVIFTVMFLSFPSGLV).

This sequence belongs to the OXA1/ALB3/YidC family. Type 1 subfamily. As to quaternary structure, interacts with the Sec translocase complex via SecD. Specifically interacts with transmembrane segments of nascent integral membrane proteins during membrane integration.

Its subcellular location is the cell inner membrane. Functionally, required for the insertion and/or proper folding and/or complex formation of integral membrane proteins into the membrane. Involved in integration of membrane proteins that insert both dependently and independently of the Sec translocase complex, as well as at least some lipoproteins. Aids folding of multispanning membrane proteins. The protein is Membrane protein insertase YidC of Magnetococcus marinus (strain ATCC BAA-1437 / JCM 17883 / MC-1).